A 130-amino-acid chain; its full sequence is Small ribosomal subunit protein uS9 (130 aa).

The protein belongs to the universal ribosomal protein uS9 family.

This Chromobacterium violaceum (strain ATCC 12472 / DSM 30191 / JCM 1249 / CCUG 213 / NBRC 12614 / NCIMB 9131 / NCTC 9757 / MK) protein is Small ribosomal subunit protein uS9.